The following is a 150-amino-acid chain: 6,7-dimethyl-8-ribityllumazine synthase (150 aa).

5-amino-6-(D-ribitylamino)uracil-binding positions include phenylalanine 11, 43–45 (VYD), and 67–69 (AVI). 72–73 (AT) contributes to the (2S)-2-hydroxy-3-oxobutyl phosphate binding site. Histidine 75 functions as the Proton donor in the catalytic mechanism. Leucine 100 is a 5-amino-6-(D-ribitylamino)uracil binding site. Residue arginine 115 coordinates (2S)-2-hydroxy-3-oxobutyl phosphate.

Belongs to the DMRL synthase family.

The catalysed reaction is (2S)-2-hydroxy-3-oxobutyl phosphate + 5-amino-6-(D-ribitylamino)uracil = 6,7-dimethyl-8-(1-D-ribityl)lumazine + phosphate + 2 H2O + H(+). Its pathway is cofactor biosynthesis; riboflavin biosynthesis; riboflavin from 2-hydroxy-3-oxobutyl phosphate and 5-amino-6-(D-ribitylamino)uracil: step 1/2. Its function is as follows. Catalyzes the formation of 6,7-dimethyl-8-ribityllumazine by condensation of 5-amino-6-(D-ribitylamino)uracil with 3,4-dihydroxy-2-butanone 4-phosphate. This is the penultimate step in the biosynthesis of riboflavin. This is 6,7-dimethyl-8-ribityllumazine synthase from Pyrobaculum arsenaticum (strain DSM 13514 / JCM 11321 / PZ6).